Here is a 632-residue protein sequence, read N- to C-terminus: PAN2-PAN3 deadenylation complex subunit PAN3 (632 aa).

Disordered stretches follow at residues 1 to 22 (MQPG…PHQL) and 99 to 127 (PTFG…PPTL). Residues 107 to 116 (MNHRASHHHQ) show a composition bias toward basic residues. Positions 117–127 (SPQMAQQPPTL) are enriched in polar residues. The tract at residues 223–494 (KADSAIIGDI…TINEIMPMIG (272 aa)) is pseudokinase domain. Residues arginine 270, 321–328 (DYYPLAGT), and 397–398 (NK) contribute to the ATP site. Residues 495-533 (GRFFTVMENMQAKTDVLEAELSREMENGRLFRLVAKMNT) adopt a coiled-coil conformation. The tract at residues 534-632 (VLERVEHGTD…LLGTNMMLHR (99 aa)) is knob domain.

It belongs to the protein kinase superfamily. PAN3 family. Homodimer. Forms a heterotrimer with a catalytic subunit PAN2 to form the poly(A)-nuclease (PAN) deadenylation complex. Interacts (via PAM-2 motif) with poly(A)-binding protein (via PABC domain), conferring substrate specificity of the enzyme complex. Interacts with the GW182 family protein ain-1. In terms of tissue distribution, highly expressed in germ cells.

The protein resides in the cytoplasm. The protein localises to the P-body. Regulatory subunit of the poly(A)-nuclease (PAN) deadenylation complex, one of two cytoplasmic mRNA deadenylases involved in general and miRNA-mediated mRNA turnover. PAN specifically shortens poly(A) tails of RNA and the activity is stimulated by poly(A)-binding protein (PABP). PAN deadenylation is followed by rapid degradation of the shortened mRNA tails by the CCR4-NOT complex. Deadenylated mRNAs are then degraded by two alternative mechanisms, namely exosome-mediated 3'-5' exonucleolytic degradation, or deadenylation-dependent mRNA decaping and subsequent 5'-3' exonucleolytic degradation by XRN1. PAN3 acts as a positive regulator for PAN activity, recruiting the catalytic subunit PAN2 to mRNA via its interaction with RNA and PABP, and to miRNA targets via its interaction with GW182 family proteins. Within the PAN complex, may positively regulate fertility. The protein is PAN2-PAN3 deadenylation complex subunit PAN3 of Caenorhabditis elegans.